Consider the following 357-residue polypeptide: NADH-quinone oxidoreductase subunit H (357 aa).

8 consecutive transmembrane segments (helical) span residues 20-40, 92-112, 127-147, 165-185, 206-226, 254-274, 294-314, and 329-349; these read WLVL…ILCV, ILFV…WAVV, LLYV…AGWA, VSYE…SGSL, FLSW…ISAV, MAFA…SCMA, IPGW…FVWF, and LGWK…AIWM.

This sequence belongs to the complex I subunit 1 family. NDH-1 is composed of 14 different subunits. Subunits NuoA, H, J, K, L, M, N constitute the membrane sector of the complex.

Its subcellular location is the cell inner membrane. The enzyme catalyses a quinone + NADH + 5 H(+)(in) = a quinol + NAD(+) + 4 H(+)(out). In terms of biological role, NDH-1 shuttles electrons from NADH, via FMN and iron-sulfur (Fe-S) centers, to quinones in the respiratory chain. The immediate electron acceptor for the enzyme in this species is believed to be ubiquinone. Couples the redox reaction to proton translocation (for every two electrons transferred, four hydrogen ions are translocated across the cytoplasmic membrane), and thus conserves the redox energy in a proton gradient. This subunit may bind ubiquinone. This chain is NADH-quinone oxidoreductase subunit H, found in Bordetella petrii (strain ATCC BAA-461 / DSM 12804 / CCUG 43448).